Here is a 475-residue protein sequence, read N- to C-terminus: Glutamate--tRNA ligase 1 (475 aa).

A 'HIGH' region motif is present at residues 11 to 21 (PSPTGYLHIGG). The 'KMSKS' region signature appears at 240–244 (KLSKR). Lys243 serves as a coordination point for ATP.

This sequence belongs to the class-I aminoacyl-tRNA synthetase family. Glutamate--tRNA ligase type 1 subfamily. Monomer.

The protein resides in the cytoplasm. It catalyses the reaction tRNA(Glu) + L-glutamate + ATP = L-glutamyl-tRNA(Glu) + AMP + diphosphate. In terms of biological role, catalyzes the attachment of glutamate to tRNA(Glu) in a two-step reaction: glutamate is first activated by ATP to form Glu-AMP and then transferred to the acceptor end of tRNA(Glu). The polypeptide is Glutamate--tRNA ligase 1 (Methylobacterium radiotolerans (strain ATCC 27329 / DSM 1819 / JCM 2831 / NBRC 15690 / NCIMB 10815 / 0-1)).